We begin with the raw amino-acid sequence, 124 residues long: Large ribosomal subunit protein bL12 (124 aa).

It belongs to the bacterial ribosomal protein bL12 family. As to quaternary structure, homodimer. Part of the ribosomal stalk of the 50S ribosomal subunit. Forms a multimeric L10(L12)X complex, where L10 forms an elongated spine to which 2 to 4 L12 dimers bind in a sequential fashion. Binds GTP-bound translation factors.

Forms part of the ribosomal stalk which helps the ribosome interact with GTP-bound translation factors. Is thus essential for accurate translation. The polypeptide is Large ribosomal subunit protein bL12 (Janthinobacterium sp. (strain Marseille) (Minibacterium massiliensis)).